Here is a 563-residue protein sequence, read N- to C-terminus: IQCJ-SCHIP1 readthrough transcript protein (563 aa).

One can recognise an IQ domain in the interval 47 to 67; that stretch reads ESKVKIIQRAWREYLQRQEPL. Disordered regions lie at residues 63–150, 164–295, 312–336, and 384–430; these read RQEP…VSAL, VIDE…EPPV, FREQ…NERE, and SGSD…SLDD. Residues 76-87 are compositionally biased toward low complexity; it reads SVSSEKLSSSVS. Residues 88–97 show a composition bias toward polar residues; that stretch reads MNTFSDSSTP. Positions 108 to 143 are enriched in low complexity; that stretch reads SDAGSSSSSSRASSQSNSTKVTPCSECKSSSSPGGS. Residues 168-182 show a composition bias toward acidic residues; that stretch reads WAPEEDGEEEEEEDE. Basic and acidic residues-rich tracts occupy residues 183-199 and 229-238; these read RDQR…REPG and HQHDPQDLRH. Phosphoserine is present on Ser-193. Over residues 318–331 the composition is skewed to polar residues; the sequence is RNQGQARTNSTSAQ. Positions 385-399 are enriched in basic and acidic residues; sequence GSDKDSDADDSKTET. Over residues 400–411 the composition is skewed to polar residues; that stretch reads SLDTPLSPMSKQ. The interval 419–563 is required for interaction with ankyrins; sequence DTTEEESESL…KHMAEKMPAK (145 aa). The span at 420–430 shows a compositional bias: acidic residues; that stretch reads TTEEESESLDD. Positions 500–534 form a coiled coil; it reads IGQLQVIVNDLHSQIESLNEELVQLLLIRDELHTE.

As to quaternary structure, homooligomer (via coiled coil domain). Interacts (via IQ domain) with calmodulin; the interaction is direct and lost in presence of calcium. Interacts with ANK3 (via ANK repeats); required for localization at axon initial segments (AIS) and nodes of Ranvier. Interacts with SPTBN4. Interacts with KCNQ2 and KCNQ3. In terms of tissue distribution, highly expressed in brain and to a lower extent in heart and kidney.

It is found in the cell projection. The protein localises to the axon. It localises to the cytoplasm. In terms of biological role, may play a role in action potential conduction in myelinated cells through the organization of molecular complexes at nodes of Ranvier and axon initial segments. May also play a role in axon outgrowth and guidance. The polypeptide is IQCJ-SCHIP1 readthrough transcript protein (Homo sapiens (Human)).